The primary structure comprises 365 residues: NADH-quinone oxidoreductase subunit H 2 (365 aa).

8 consecutive transmembrane segments (helical) span residues 1–21 (MFVVLFVLTLILLYAVFVVWA), 71–91 (LAPVLIFTAIFAGFATLPFAP), 100–120 (VGVFFMITIVSLDVVGIFLAG), 136–156 (IAQVISYEIPLTLSILAVVLI), 199–219 (FVSWNAFKYPFLLLAYVVFFI), 254–274 (ILFLAEYAMMLLVAFLGVVLF), 301–321 (IAGYAWGLFWLISKGITVVFL), and 342–362 (WKILLPLSLFLVIVSGVWVVW).

It belongs to the complex I subunit 1 family. In terms of assembly, NDH-1 is composed of 14 different subunits. Subunits NuoA, H, J, K, L, M, N constitute the membrane sector of the complex.

The protein localises to the cell inner membrane. The enzyme catalyses a quinone + NADH + 5 H(+)(in) = a quinol + NAD(+) + 4 H(+)(out). Its function is as follows. NDH-1 shuttles electrons from NADH, via FMN and iron-sulfur (Fe-S) centers, to quinones in the respiratory chain. The immediate electron acceptor for the enzyme in this species is believed to be ubiquinone. Couples the redox reaction to proton translocation (for every two electrons transferred, four hydrogen ions are translocated across the cytoplasmic membrane), and thus conserves the redox energy in a proton gradient. This subunit may bind ubiquinone. The protein is NADH-quinone oxidoreductase subunit H 2 of Cytophaga hutchinsonii (strain ATCC 33406 / DSM 1761 / CIP 103989 / NBRC 15051 / NCIMB 9469 / D465).